We begin with the raw amino-acid sequence, 375 residues long: Trichodiene synthase (375 aa).

This sequence belongs to the trichodiene synthase family.

It carries out the reaction (2E,6E)-farnesyl diphosphate = trichodiene + diphosphate. The protein operates within sesquiterpene biosynthesis; trichothecene biosynthesis. In terms of biological role, TS is a member of the terpene cyclase group of enzymes. It catalyzes the isomerization and cyclization of farnesyl pyro-phosphate to form trichodiene, the first cyclic intermediate in the biosynthetic pathway for trichothecenes. It serves to branch trichothecene biosynthesis from the isoprenoid pathway. The polypeptide is Trichodiene synthase (TRI5) (Fusarium acaciae-mearnsii).